The primary structure comprises 436 residues: Trigger factor (436 aa).

A PPIase FKBP-type domain is found at 161-246 (DDQLNIDFVG…VNSVAEPKLP (86 aa)).

The protein belongs to the FKBP-type PPIase family. Tig subfamily.

It localises to the cytoplasm. It carries out the reaction [protein]-peptidylproline (omega=180) = [protein]-peptidylproline (omega=0). Involved in protein export. Acts as a chaperone by maintaining the newly synthesized protein in an open conformation. Functions as a peptidyl-prolyl cis-trans isomerase. In Pseudomonas aeruginosa (strain LESB58), this protein is Trigger factor.